The primary structure comprises 141 residues: Large ribosomal subunit protein uL11 (141 aa).

This sequence belongs to the universal ribosomal protein uL11 family. As to quaternary structure, part of the ribosomal stalk of the 50S ribosomal subunit. Interacts with L10 and the large rRNA to form the base of the stalk. L10 forms an elongated spine to which L12 dimers bind in a sequential fashion forming a multimeric L10(L12)X complex. One or more lysine residues are methylated.

Its function is as follows. Forms part of the ribosomal stalk which helps the ribosome interact with GTP-bound translation factors. The polypeptide is Large ribosomal subunit protein uL11 (Thermotoga petrophila (strain ATCC BAA-488 / DSM 13995 / JCM 10881 / RKU-1)).